The primary structure comprises 108 residues: uncharacterized protein (108 aa).

This is an uncharacterized protein from Saccharomyces cerevisiae (strain ATCC 204508 / S288c) (Baker's yeast).